A 443-amino-acid polypeptide reads, in one-letter code: Glycerol-3-phosphate acyltransferase 3-like (443 aa).

3 helical membrane passes run 15-35, 146-166, and 170-190; these read WFSC…SLGI, ISLR…CILL, and ITLT…VGFL. The HXXXXD motif motif lies at 238 to 243; the sequence is HTSPID. Residues 358–378 form a helical membrane-spanning segment; sequence IMSYLLRMMTSWAIVCNVWYL.

Belongs to the 1-acyl-sn-glycerol-3-phosphate acyltransferase family.

It is found in the endoplasmic reticulum membrane. The catalysed reaction is sn-glycerol 3-phosphate + an acyl-CoA = a 1-acyl-sn-glycero-3-phosphate + CoA. The enzyme catalyses a 1-acyl-sn-glycero-3-phosphate + an acyl-CoA = a 1,2-diacyl-sn-glycero-3-phosphate + CoA. Its pathway is glycerolipid metabolism; triacylglycerol biosynthesis. It functions in the pathway phospholipid metabolism; CDP-diacylglycerol biosynthesis; CDP-diacylglycerol from sn-glycerol 3-phosphate: step 1/3. May transfer the acyl-group from acyl-coA to the sn-1 position of glycerol-3-phosphate, an essential step in glycerolipid biosynthesis. Also transfers the acyl-group from acyl-coA to the sn-2 position of 1-acyl-sn-glycerol-3-phosphate (lysophosphatidic acid, or LPA), forming 1,2-diacyl-sn-glycerol-3-phosphate (phosphatidic acid, or PA). This Danio rerio (Zebrafish) protein is Glycerol-3-phosphate acyltransferase 3-like (agpat9l).